Reading from the N-terminus, the 324-residue chain is Ribosomal lysine N-methyltransferase 5 (324 aa).

Residues Trp-90, 140-142, Asp-162, Trp-217, and Met-247 contribute to the S-adenosyl-L-methionine site; that span reads GSG.

Belongs to the class I-like SAM-binding methyltransferase superfamily. RKM5 family.

Functionally, S-adenosyl-L-methionine-dependent protein-lysine N-methyltransferase that methylates 60S ribosomal protein L1. The polypeptide is Ribosomal lysine N-methyltransferase 5 (RKM5) (Vanderwaltozyma polyspora (strain ATCC 22028 / DSM 70294 / BCRC 21397 / CBS 2163 / NBRC 10782 / NRRL Y-8283 / UCD 57-17) (Kluyveromyces polysporus)).